The chain runs to 285 residues: Mitochondrial substrate carrier family protein S (285 aa).

Over 1-9 the chain is Mitochondrial intermembrane; that stretch reads MSTERGLKD. 3 Solcar repeats span residues 4-87, 96-183, and 197-283; these read ERGL…MKVL, LTVG…CKRY, and LNLP…VIKL. Residues 10-30 form a helical membrane-spanning segment; sequence SIAGTVAGAACLFTGHPFDTI. Over 31–61 the chain is Mitochondrial matrix; sequence RVRLQTSNTPIGIMECFRNTIKYEGFSGLYK. Residues 62-82 form a helical membrane-spanning segment; that stretch reads GVTSPLFGMMFETAVLFAGYG. At 83–101 the chain is on the mitochondrial intermembrane side; that stretch reads QMKVLLQKDENTPLTVGQC. Residues 102-122 traverse the membrane as a helical segment; the sequence is AIAGGFAGVGASVVLTPVELV. The Mitochondrial matrix segment spans residues 123–150; it reads KCRLQVQTTGPQKYKGSLDCLVQILKEG. Residues 151 to 172 form a helical membrane-spanning segment; the sequence is GIRGAYRGFTPTIAREFVGNMA. Residues 173–199 are Mitochondrial intermembrane-facing; sequence FFSTYETCKRYFKNKENKPNDDDELNL. Residues 200-220 form a helical membrane-spanning segment; it reads PALIISGGLGGMAYWTVLYPV. The Mitochondrial matrix segment spans residues 221 to 258; the sequence is DVAKSKIQISEGAGPSPSIVKVLKEIYSKEGVKGLFRG. A helical membrane pass occupies residues 259-277; that stretch reads YTPTIIRSFPANAAMFSVY. Residues 278 to 285 are Mitochondrial intermembrane-facing; it reads ELVIKLLG.

Belongs to the mitochondrial carrier (TC 2.A.29) family.

The protein resides in the mitochondrion inner membrane. In terms of biological role, mitochondrial solute carriers shuttle metabolites, nucleotides, and cofactors through the mitochondrial inner membrane. Mediates the transport of acylcarnitines of different length across the mitochondrial inner membrane from the cytosol to the mitochondrial matrix for their oxidation by the mitochondrial fatty acid-oxidation pathway. The sequence is that of Mitochondrial substrate carrier family protein S (mcfS) from Dictyostelium discoideum (Social amoeba).